A 168-amino-acid polypeptide reads, in one-letter code: Protein-export protein SecB (168 aa).

This sequence belongs to the SecB family. In terms of assembly, homotetramer, a dimer of dimers. One homotetramer interacts with 1 SecA dimer.

The protein resides in the cytoplasm. One of the proteins required for the normal export of preproteins out of the cell cytoplasm. It is a molecular chaperone that binds to a subset of precursor proteins, maintaining them in a translocation-competent state. It also specifically binds to its receptor SecA. The protein is Protein-export protein SecB of Sinorhizobium medicae (strain WSM419) (Ensifer medicae).